We begin with the raw amino-acid sequence, 271 residues long: uncharacterized protein (271 aa).

It belongs to the metallo-dependent hydrolases superfamily. Peptidase M19 family.

This is an uncharacterized protein from Klebsiella pneumoniae.